We begin with the raw amino-acid sequence, 879 residues long: Phosphoenolpyruvate carboxylase (879 aa).

Catalysis depends on residues H138 and K545.

Belongs to the PEPCase type 1 family. The cofactor is Mg(2+).

It catalyses the reaction oxaloacetate + phosphate = phosphoenolpyruvate + hydrogencarbonate. Functionally, forms oxaloacetate, a four-carbon dicarboxylic acid source for the tricarboxylic acid cycle. The sequence is that of Phosphoenolpyruvate carboxylase from Haemophilus influenzae (strain PittEE).